The sequence spans 193 residues: Peptidyl-tRNA hydrolase (193 aa).

Position 17 (histidine 17) interacts with tRNA. Histidine 22 serves as the catalytic Proton acceptor. TRNA contacts are provided by phenylalanine 68, asparagine 70, and asparagine 116.

Belongs to the PTH family. As to quaternary structure, monomer.

Its subcellular location is the cytoplasm. It catalyses the reaction an N-acyl-L-alpha-aminoacyl-tRNA + H2O = an N-acyl-L-amino acid + a tRNA + H(+). Hydrolyzes ribosome-free peptidyl-tRNAs (with 1 or more amino acids incorporated), which drop off the ribosome during protein synthesis, or as a result of ribosome stalling. Its function is as follows. Catalyzes the release of premature peptidyl moieties from peptidyl-tRNA molecules trapped in stalled 50S ribosomal subunits, and thus maintains levels of free tRNAs and 50S ribosomes. This Xanthomonas campestris pv. campestris (strain 8004) protein is Peptidyl-tRNA hydrolase.